A 541-amino-acid chain; its full sequence is Zinc finger CCHC domain-containing protein 7 (541 aa).

The disordered stretch occupies residues 111–144 (AEEKTQSPATSHSNKVAQKCKRNNKKPKPEERPG). Residues 116 to 126 (QSPATSHSNKV) show a composition bias toward polar residues. Residues Lys129, Lys136, Lys138, Lys234, and Lys249 each participate in a glycyl lysine isopeptide (Lys-Gly) (interchain with G-Cter in SUMO2) cross-link. CCHC-type zinc fingers lie at residues 236–253 (VTCR…NCPL), 258–275 (RACC…GCPA), and 299–316 (KRCD…ACPE). Lys334 participates in a covalent cross-link: Glycyl lysine isopeptide (Lys-Gly) (interchain with G-Cter in SUMO2). The CCHC-type 4 zinc finger occupies 343–360 (VYCYNCAQKGHYGHECTE). The tract at residues 394–541 (VKDLKKNGDF…KKKKPKPSGL (148 aa)) is disordered. Residues Lys408 and Lys431 each participate in a glycyl lysine isopeptide (Lys-Gly) (interchain with G-Cter in SUMO2) cross-link. A compositionally biased stretch (basic residues) spans 418–434 (RRHHDMRKSRSPRKYRR). Over residues 435-452 (WPRENKETQKEKTRSREG) the composition is skewed to basic and acidic residues. Lys473 participates in a covalent cross-link: Glycyl lysine isopeptide (Lys-Gly) (interchain with G-Cter in SUMO2). The segment covering 474–486 (PNASGCANNQKPS) has biased composition (polar residues). A Phosphoserine modification is found at Ser477. Residues Lys484 and Lys487 each participate in a glycyl lysine isopeptide (Lys-Gly) (interchain with G-Cter in SUMO2) cross-link. Positions 487–497 (KSLHHASHYHR) are enriched in basic residues. 2 stretches are compositionally biased toward basic and acidic residues: residues 498–509 (LREERLLRESKR) and 517–527 (STEDGSHDDLF). Lys530 participates in a covalent cross-link: Glycyl lysine isopeptide (Lys-Gly) (interchain with G-Cter in SUMO2). Residues 530–541 (KQKKKKPKPSGL) are compositionally biased toward basic residues.

In terms of assembly, component of a nucleolar TRAMP-like complex, an ATP-dependent exosome regulatory complex consisting of a helicase (MTREX), an oligadenylate polymerase (TENT4B or TENT4A), and a substrate specific RNA-binding factor (ZCCHC7 or ZCCHC8). Several TRAMP-like complexes exist with specific compositions and are associated with nuclear, or nucleolar RNA exosomes.

Its subcellular location is the nucleus. The protein localises to the nucleolus. This Mus musculus (Mouse) protein is Zinc finger CCHC domain-containing protein 7 (Zcchc7).